A 164-amino-acid polypeptide reads, in one-letter code: Crossover junction endodeoxyribonuclease RuvC (164 aa).

Catalysis depends on residues D7, E67, and D140. Mg(2+) is bound by residues D7, E67, and D140.

The protein belongs to the RuvC family. Homodimer which binds Holliday junction (HJ) DNA. The HJ becomes 2-fold symmetrical on binding to RuvC with unstacked arms; it has a different conformation from HJ DNA in complex with RuvA. In the full resolvosome a probable DNA-RuvA(4)-RuvB(12)-RuvC(2) complex forms which resolves the HJ. It depends on Mg(2+) as a cofactor.

Its subcellular location is the cytoplasm. It carries out the reaction Endonucleolytic cleavage at a junction such as a reciprocal single-stranded crossover between two homologous DNA duplexes (Holliday junction).. The RuvA-RuvB-RuvC complex processes Holliday junction (HJ) DNA during genetic recombination and DNA repair. Endonuclease that resolves HJ intermediates. Cleaves cruciform DNA by making single-stranded nicks across the HJ at symmetrical positions within the homologous arms, yielding a 5'-phosphate and a 3'-hydroxyl group; requires a central core of homology in the junction. The consensus cleavage sequence is 5'-(A/T)TT(C/G)-3'. Cleavage occurs on the 3'-side of the TT dinucleotide at the point of strand exchange. HJ branch migration catalyzed by RuvA-RuvB allows RuvC to scan DNA until it finds its consensus sequence, where it cleaves and resolves the cruciform DNA. The chain is Crossover junction endodeoxyribonuclease RuvC from Finegoldia magna (strain ATCC 29328 / DSM 20472 / WAL 2508) (Peptostreptococcus magnus).